We begin with the raw amino-acid sequence, 214 residues long: Large ribosomal subunit protein uL3 (214 aa).

Residues 133–154 form a disordered region; that stretch reads GLGAGHGTQRKHRSPGSIGGCA.

Belongs to the universal ribosomal protein uL3 family. Part of the 50S ribosomal subunit. Forms a cluster with proteins L14 and L19.

Its function is as follows. One of the primary rRNA binding proteins, it binds directly near the 3'-end of the 23S rRNA, where it nucleates assembly of the 50S subunit. This Streptomyces avermitilis (strain ATCC 31267 / DSM 46492 / JCM 5070 / NBRC 14893 / NCIMB 12804 / NRRL 8165 / MA-4680) protein is Large ribosomal subunit protein uL3.